The primary structure comprises 266 residues: Ribosomal RNA small subunit methyltransferase J (266 aa).

S-adenosyl-L-methionine-binding positions include 109-110 (RD), 125-126 (ER), and aspartate 185.

Belongs to the methyltransferase superfamily. RsmJ family.

The protein resides in the cytoplasm. It carries out the reaction guanosine(1516) in 16S rRNA + S-adenosyl-L-methionine = N(2)-methylguanosine(1516) in 16S rRNA + S-adenosyl-L-homocysteine + H(+). Its function is as follows. Specifically methylates the guanosine in position 1516 of 16S rRNA. The sequence is that of Ribosomal RNA small subunit methyltransferase J from Cellvibrio japonicus (strain Ueda107) (Pseudomonas fluorescens subsp. cellulosa).